The chain runs to 153 residues: Small heat shock protein ibp (153 aa).

The sHSP domain occupies Lys35–Lys153.

The protein belongs to the small heat shock protein (HSP20) family.

The polypeptide is Small heat shock protein ibp (ibp) (Buchnera aphidicola subsp. Thelaxes suberi).